We begin with the raw amino-acid sequence, 447 residues long: UPF0210 protein Lreu_0940 (447 aa).

Belongs to the UPF0210 family. As to quaternary structure, homodimer.

The chain is UPF0210 protein Lreu_0940 from Limosilactobacillus reuteri (strain DSM 20016) (Lactobacillus reuteri).